A 300-amino-acid polypeptide reads, in one-letter code: ClpXP adapter protein SpxH (300 aa).

Belongs to the SpxH family. As to quaternary structure, interacts with Spx.

Its subcellular location is the cytoplasm. In terms of biological role, adapter protein required for efficient degradation of Spx by ClpXP under non-stress conditions. Interaction with Spx stabilizes Spx and exposes the C-terminus of Spx for recognition and proteolysis by ClpXP. This chain is ClpXP adapter protein SpxH, found in Shouchella clausii (strain KSM-K16) (Alkalihalobacillus clausii).